The sequence spans 213 residues: UPF0502 protein Daro_2469 (213 aa).

It belongs to the UPF0502 family.

The chain is UPF0502 protein Daro_2469 from Dechloromonas aromatica (strain RCB).